The chain runs to 333 residues: uncharacterized protein (333 aa).

In terms of domain architecture, Radical SAM core spans 67 to 274 (HFYPTTQVVS…LEMARNLAIE (208 aa)). Cys82, Cys86, and Cys89 together coordinate [4Fe-4S] cluster.

[4Fe-4S] cluster is required as a cofactor.

This is an uncharacterized protein from Methanocaldococcus jannaschii (strain ATCC 43067 / DSM 2661 / JAL-1 / JCM 10045 / NBRC 100440) (Methanococcus jannaschii).